The primary structure comprises 479 residues: Glucagon receptor (479 aa).

Residues 1–25 (MPPARLRHPHLLLLLLLACQPQAPA) form the signal peptide. Residues 26-136 (AQAMDFLFQK…ELGVQREVAE (111 aa)) lie on the Extracellular side of the membrane. 3 disulfide bridges follow: Cys43–Cys67, Cys58–Cys100, and Cys81–Cys121. N-linked (GlcNAc...) asparagine glycosylation is found at Asn46, Asn59, Asn74, Asn78, and Asn117. The chain crosses the membrane as a helical span at residues 137 to 161 (MYSSFQAMYTAGYSLSLAALLLALA). Topologically, residues 162–173 (ILLGLSKLHCTR) are cytoplasmic. Residues 174–198 (NYIHANLLASFVLRASSVLALDALL) form a helical membrane-spanning segment. The Extracellular portion of the chain corresponds to 199–225 (KTRYSQRLGDDLSVSIWLSDEAVAGCR). The cysteines at positions 224 and 294 are disulfide-linked. The chain crosses the membrane as a helical span at residues 226–249 (VAAVFMQYGVVANYCWLLVEGVYL). Residues 250-263 (HSLLRQATIPERSC) lie on the Cytoplasmic side of the membrane. Residues 264–285 (FPLYLAIGWGAPMLFVIPWAVV) form a helical membrane-spanning segment. Residues 286–303 (KCLFENIQCWTSNDNMGF) are Extracellular-facing. The chain crosses the membrane as a helical span at residues 304–326 (WWILRFPVFLAILINFSIFIRVL). Residues 327 to 350 (HVLVAKLRAHQMRCTDYKFRLARS) are Cytoplasmic-facing. The helical transmembrane segment at 351–369 (TLTLIPLLGVHEVVFAFVT) threads the bilayer. Over 370-381 (DEHAQGALRSAK) the chain is Extracellular. Residues 382–402 (LFFDLFLSSFQGLLVAVLYCF) form a helical membrane-spanning segment. Residues 403–479 (LNKEVQAELL…GLPGVAENPF (77 aa)) lie on the Cytoplasmic side of the membrane. Residues 426-479 (KAHRVGSHSARPPSGPPSEKLLLSTGGSSNGTSQEPSAETHLASGLPGVAENPF) are disordered. Positions 446-458 (LLLSTGGSSNGTS) are enriched in low complexity. Position 458 is a phosphoserine (Ser458).

The protein belongs to the G-protein coupled receptor 2 family. Post-translationally, ligand-binding promotes phosphorylation of serine residues in the C-terminal cytoplasmic domain. Phosphorylation is important for receptor endocytosis after ligand-binding.

It localises to the cell membrane. Functionally, G-protein coupled receptor for glucagon that plays a central role in the regulation of blood glucose levels and glucose homeostasis. Regulates the rate of hepatic glucose production by promoting glycogen hydrolysis and gluconeogenesis. Plays an important role in mediating the responses to fasting. Ligand binding causes a conformation change that triggers signaling via guanine nucleotide-binding proteins (G proteins) and modulates the activity of down-stream effectors, such as adenylate cyclase. Promotes activation of adenylate cyclase. Besides, plays a role in signaling via a phosphatidylinositol-calcium second messenger system. This is Glucagon receptor from Sus scrofa (Pig).